We begin with the raw amino-acid sequence, 305 residues long: tRNA pseudouridine synthase B (305 aa).

The active-site Nucleophile is Asp39.

This sequence belongs to the pseudouridine synthase TruB family. Type 1 subfamily.

The catalysed reaction is uridine(55) in tRNA = pseudouridine(55) in tRNA. Its function is as follows. Responsible for synthesis of pseudouridine from uracil-55 in the psi GC loop of transfer RNAs. This Staphylococcus aureus (strain MRSA252) protein is tRNA pseudouridine synthase B.